The sequence spans 87 residues: Small ribosomal subunit protein bS18B (87 aa).

Belongs to the bacterial ribosomal protein bS18 family. In terms of assembly, part of the 30S ribosomal subunit. Forms a tight heterodimer with protein bS6.

Binds as a heterodimer with protein bS6 to the central domain of the 16S rRNA, where it helps stabilize the platform of the 30S subunit. The polypeptide is Small ribosomal subunit protein bS18B (Mycobacterium marinum (strain ATCC BAA-535 / M)).